Here is a 265-residue protein sequence, read N- to C-terminus: Chanoclavine-I dehydrogenase easD (265 aa).

An N-terminal signal peptide occupies residues 1 to 20 (MSFVSSKIFAITGGASGIGA). NADP(+) is bound by residues I18, D66, R132, Y169, K173, and T205. Y169 acts as the Proton donor in catalysis. K173 (lowers pKa of active site Tyr) is an active-site residue.

This sequence belongs to the short-chain dehydrogenases/reductases (SDR) family. In terms of assembly, homotetramer.

It carries out the reaction chanoclavine-I + NAD(+) = chanoclavine-I aldehyde + NADH + H(+). The protein operates within alkaloid biosynthesis; ergot alkaloid biosynthesis. Functionally, chanoclavine-I dehydrogenase; part of the gene cluster that mediates the biosynthesis of fungal ergot alkaloid. DmaW catalyzes the first step of ergot alkaloid biosynthesis by condensing dimethylallyl diphosphate (DMAP) and tryptophan to form 4-dimethylallyl-L-tryptophan. The second step is catalyzed by the methyltransferase easF that methylates 4-dimethylallyl-L-tryptophan in the presence of S-adenosyl-L-methionine, resulting in the formation of 4-dimethylallyl-L-abrine. The catalase easC and the FAD-dependent oxidoreductase easE then transform 4-dimethylallyl-L-abrine to chanoclavine-I which is further oxidized by easD in the presence of NAD(+), resulting in the formation of chanoclavine-I aldehyde. Chanoclavine-I aldehyde is the precursor of ergoamides and ergopeptines in Clavicipitaceae, and clavine-type alcaloids such as fumiclavine in Trichocomaceae. However, the metabolites downstream of chanoclavine-I aldehyde in Arthrodermataceae have not been identified yet. In Trichophyton verrucosum (strain HKI 0517), this protein is Chanoclavine-I dehydrogenase easD.